The following is a 751-amino-acid chain: Photosystem I P700 chlorophyll a apoprotein A1 (751 aa).

A run of 8 helical transmembrane segments spans residues 72–95, 158–181, 197–221, 293–311, 348–371, 387–413, 435–457, and 532–550; these read IFSA…FHGA, LYCT…FHYH, MNHH…HVSM, TAHH…GHMY, WHAQ…QHMY, LSLF…IFMV, AIIS…LYIH, and FMVH…LILL. C574 and C583 together coordinate [4Fe-4S] cluster. 2 consecutive transmembrane segments (helical) span residues 590–611 and 665–687; these read HVFL…HFSW and LSAY…MFLF. Residue H676 participates in chlorophyll a' binding. Positions 684 and 692 each coordinate chlorophyll a. W693 contributes to the phylloquinone binding site. The helical transmembrane segment at 725-745 threads the bilayer; sequence AVGVAHYLLGGIVTTWAFFLA.

This sequence belongs to the PsaA/PsaB family. The PsaA/B heterodimer binds the P700 chlorophyll special pair and subsequent electron acceptors. PSI consists of a core antenna complex that captures photons, and an electron transfer chain that converts photonic excitation into a charge separation. The cyanobacterial PSI reaction center is composed of one copy each of PsaA,B,C,D,E,F,I,J,K,L,M and X, and forms trimeric complexes. It depends on PSI electron transfer chain: 5 chlorophyll a, 1 chlorophyll a', 2 phylloquinones and 3 4Fe-4S clusters. PSI core antenna: 90 chlorophyll a, 22 carotenoids, 3 phospholipids and 1 galactolipid. P700 is a chlorophyll a/chlorophyll a' dimer, A0 is one or more chlorophyll a, A1 is one or both phylloquinones and FX is a shared 4Fe-4S iron-sulfur center. as a cofactor.

Its subcellular location is the cellular thylakoid membrane. The enzyme catalyses reduced [plastocyanin] + hnu + oxidized [2Fe-2S]-[ferredoxin] = oxidized [plastocyanin] + reduced [2Fe-2S]-[ferredoxin]. Functionally, psaA and PsaB bind P700, the primary electron donor of photosystem I (PSI), as well as the electron acceptors A0, A1 and FX. PSI is a plastocyanin/cytochrome c6-ferredoxin oxidoreductase, converting photonic excitation into a charge separation, which transfers an electron from the donor P700 chlorophyll pair to the spectroscopically characterized acceptors A0, A1, FX, FA and FB in turn. Oxidized P700 is reduced on the lumenal side of the thylakoid membrane by plastocyanin or cytochrome c6. The chain is Photosystem I P700 chlorophyll a apoprotein A1 from Synechocystis sp. (strain ATCC 27184 / PCC 6803 / Kazusa).